Reading from the N-terminus, the 281-residue chain is Imidazole glycerol phosphate synthase subunit HisF (281 aa).

Active-site residues include aspartate 12 and aspartate 131. The segment at 256–281 is disordered; that stretch reads VRQAEPLPQPAREGLGDSARRAMSSG.

Belongs to the HisA/HisF family. As to quaternary structure, heterodimer of HisH and HisF.

The protein localises to the cytoplasm. The enzyme catalyses 5-[(5-phospho-1-deoxy-D-ribulos-1-ylimino)methylamino]-1-(5-phospho-beta-D-ribosyl)imidazole-4-carboxamide + L-glutamine = D-erythro-1-(imidazol-4-yl)glycerol 3-phosphate + 5-amino-1-(5-phospho-beta-D-ribosyl)imidazole-4-carboxamide + L-glutamate + H(+). The protein operates within amino-acid biosynthesis; L-histidine biosynthesis; L-histidine from 5-phospho-alpha-D-ribose 1-diphosphate: step 5/9. IGPS catalyzes the conversion of PRFAR and glutamine to IGP, AICAR and glutamate. The HisF subunit catalyzes the cyclization activity that produces IGP and AICAR from PRFAR using the ammonia provided by the HisH subunit. The protein is Imidazole glycerol phosphate synthase subunit HisF of Thermosynechococcus vestitus (strain NIES-2133 / IAM M-273 / BP-1).